Reading from the N-terminus, the 391-residue chain is NAD(P)H-quinone oxidoreductase subunit H, chloroplastic (391 aa).

It belongs to the complex I 49 kDa subunit family. NDH is composed of at least 16 different subunits, 5 of which are encoded in the nucleus.

The protein resides in the plastid. It is found in the chloroplast thylakoid membrane. The catalysed reaction is a plastoquinone + NADH + (n+1) H(+)(in) = a plastoquinol + NAD(+) + n H(+)(out). It catalyses the reaction a plastoquinone + NADPH + (n+1) H(+)(in) = a plastoquinol + NADP(+) + n H(+)(out). Its function is as follows. NDH shuttles electrons from NAD(P)H:plastoquinone, via FMN and iron-sulfur (Fe-S) centers, to quinones in the photosynthetic chain and possibly in a chloroplast respiratory chain. The immediate electron acceptor for the enzyme in this species is believed to be plastoquinone. Couples the redox reaction to proton translocation, and thus conserves the redox energy in a proton gradient. In Physcomitrium patens (Spreading-leaved earth moss), this protein is NAD(P)H-quinone oxidoreductase subunit H, chloroplastic.